Reading from the N-terminus, the 95-residue chain is Co-chaperonin GroES (95 aa).

The protein belongs to the GroES chaperonin family. As to quaternary structure, heptamer of 7 subunits arranged in a ring. Interacts with the chaperonin GroEL.

It is found in the cytoplasm. In terms of biological role, together with the chaperonin GroEL, plays an essential role in assisting protein folding. The GroEL-GroES system forms a nano-cage that allows encapsulation of the non-native substrate proteins and provides a physical environment optimized to promote and accelerate protein folding. GroES binds to the apical surface of the GroEL ring, thereby capping the opening of the GroEL channel. The sequence is that of Co-chaperonin GroES from Rickettsia bellii (strain RML369-C).